The following is a 909-amino-acid chain: Protein translocase subunit SecA (909 aa).

Residues glutamine 87, 105–109 (GEGKT), and aspartate 513 contribute to the ATP site. The disordered stretch occupies residues 834–909 (QEEVERMEEQ…KYKQCHGKID (76 aa)). Basic and acidic residues predominate over residues 836–853 (EVERMEEQRRAQAEEAAR). Low complexity predominate over residues 854–863 (RAQAQHAAAQ). The span at 874-889 (EGAHQPMVREERKVGR) shows a compositional bias: basic and acidic residues. Zn(2+) contacts are provided by cysteine 893, cysteine 895, cysteine 904, and histidine 905. Basic residues predominate over residues 899–909 (KKYKQCHGKID).

It belongs to the SecA family. Monomer and homodimer. Part of the essential Sec protein translocation apparatus which comprises SecA, SecYEG and auxiliary proteins SecDF-YajC and YidC. It depends on Zn(2+) as a cofactor.

The protein resides in the cell inner membrane. It localises to the cytoplasm. It carries out the reaction ATP + H2O + cellular proteinSide 1 = ADP + phosphate + cellular proteinSide 2.. Functionally, part of the Sec protein translocase complex. Interacts with the SecYEG preprotein conducting channel. Has a central role in coupling the hydrolysis of ATP to the transfer of proteins into and across the cell membrane, serving both as a receptor for the preprotein-SecB complex and as an ATP-driven molecular motor driving the stepwise translocation of polypeptide chains across the membrane. This Vibrio campbellii (strain ATCC BAA-1116) protein is Protein translocase subunit SecA.